Here is a 257-residue protein sequence, read N- to C-terminus: Diphthine synthase (257 aa).

S-adenosyl-L-methionine contacts are provided by residues L9, D86, V89, 114 to 115, L166, A207, and H232; that span reads SI.

Belongs to the diphthine synthase family. In terms of assembly, homodimer.

It catalyses the reaction 2-[(3S)-amino-3-carboxypropyl]-L-histidyl-[translation elongation factor 2] + 3 S-adenosyl-L-methionine = diphthine-[translation elongation factor 2] + 3 S-adenosyl-L-homocysteine + 3 H(+). Its pathway is protein modification; peptidyl-diphthamide biosynthesis. Functionally, S-adenosyl-L-methionine-dependent methyltransferase that catalyzes the trimethylation of the amino group of the modified target histidine residue in translation elongation factor 2 (EF-2), to form an intermediate called diphthine. The three successive methylation reactions represent the second step of diphthamide biosynthesis. This Methanocella arvoryzae (strain DSM 22066 / NBRC 105507 / MRE50) protein is Diphthine synthase.